The following is a 118-amino-acid chain: Large ribosomal subunit protein bL20 (118 aa).

It belongs to the bacterial ribosomal protein bL20 family.

Binds directly to 23S ribosomal RNA and is necessary for the in vitro assembly process of the 50S ribosomal subunit. It is not involved in the protein synthesizing functions of that subunit. This chain is Large ribosomal subunit protein bL20, found in Lactobacillus delbrueckii subsp. bulgaricus (strain ATCC BAA-365 / Lb-18).